We begin with the raw amino-acid sequence, 95 residues long: Co-chaperonin GroES (95 aa).

This sequence belongs to the GroES chaperonin family. As to quaternary structure, heptamer of 7 subunits arranged in a ring. Interacts with the chaperonin GroEL.

The protein localises to the cytoplasm. Together with the chaperonin GroEL, plays an essential role in assisting protein folding. The GroEL-GroES system forms a nano-cage that allows encapsulation of the non-native substrate proteins and provides a physical environment optimized to promote and accelerate protein folding. GroES binds to the apical surface of the GroEL ring, thereby capping the opening of the GroEL channel. This Aliivibrio salmonicida (strain LFI1238) (Vibrio salmonicida (strain LFI1238)) protein is Co-chaperonin GroES.